The primary structure comprises 492 residues: Steroid 21-hydroxylase (492 aa).

Positions 91 and 120 each coordinate heme b. Arg-231 contributes to the 17alpha-hydroxyprogesterone binding site. Arg-231 contributes to the progesterone binding site. Residues His-363, Arg-424, and Cys-426 each contribute to the heme b site.

This sequence belongs to the cytochrome P450 family. Heme b serves as cofactor.

The protein resides in the endoplasmic reticulum membrane. It is found in the microsome membrane. The enzyme catalyses 17alpha-hydroxyprogesterone + reduced [NADPH--hemoprotein reductase] + O2 = 11-deoxycortisol + oxidized [NADPH--hemoprotein reductase] + H2O + H(+). The catalysed reaction is progesterone + reduced [NADPH--hemoprotein reductase] + O2 = 21-hydroxyprogesterone + oxidized [NADPH--hemoprotein reductase] + H2O + H(+). In terms of biological role, specifically catalyzes the 21-hydroxylation of steroids. Required for the adrenal synthesis of mineralocorticoids and glucocorticoids. The protein is Steroid 21-hydroxylase (CYP21) of Canis lupus familiaris (Dog).